A 578-amino-acid polypeptide reads, in one-letter code: Arginine--tRNA ligase (578 aa).

Residues 123 to 133 (PNIAKEMHVGH) carry the 'HIGH' region motif.

It belongs to the class-I aminoacyl-tRNA synthetase family. As to quaternary structure, monomer.

Its subcellular location is the cytoplasm. It catalyses the reaction tRNA(Arg) + L-arginine + ATP = L-arginyl-tRNA(Arg) + AMP + diphosphate. The chain is Arginine--tRNA ligase from Baumannia cicadellinicola subsp. Homalodisca coagulata.